A 46-amino-acid polypeptide reads, in one-letter code: uncharacterized protein (46 aa).

This is an uncharacterized protein from Escherichia coli (Bacteriophage T4).